Consider the following 208-residue polypeptide: CKLF-like MARVEL transmembrane domain-containing protein 4 (208 aa).

Over residues 1-11 the composition is skewed to acidic residues; sequence MRGGEELDGFE. Residues 1 to 38 form a disordered region; the sequence is MRGGEELDGFEGEASSTSMISGASSPYQPTTEPVSQRR. Positions 15 to 25 are enriched in low complexity; the sequence is SSTSMISGASS. In terms of domain architecture, MARVEL spans 49-176; it reads YLRGALGRLK…STFLAMQKWR (128 aa). Helical transmembrane passes span 59 to 79, 85 to 105, 123 to 143, and 151 to 171; these read VAQVILALIAFICIETIMECS, YFFEFVSCSAFVVTGVLLILF, LVNTGLSTFFFFIASIVLAAL, and IAAVIFGFLATAAYAVSTFLA. Phosphoserine is present on Ser-194.

Belongs to the chemokine-like factor family. Interacts with PD1L1 and CMTM6.

It localises to the membrane. Acts as a backup for CMTM6 to regulate plasma membrane expression of PD-L1/CD274, an immune inhibitory ligand critical for immune tolerance to self and antitumor immunity. May protect PD-L1/CD274 from being polyubiquitinated and targeted for degradation. In Mus musculus (Mouse), this protein is CKLF-like MARVEL transmembrane domain-containing protein 4.